Consider the following 486-residue polypeptide: NADH-quinone oxidoreductase subunit N (486 aa).

A run of 13 helical transmembrane segments spans residues 5–25 (IGLS…ASLL), 41–61 (LITL…LVVF), 77–97 (GVTQ…MVMM), 118–138 (SAVG…FIGL), 165–185 (YFIL…FIFG), 209–229 (FLFG…IAPF), 245–265 (TAFM…RIIA), 275–295 (LFDI…AAAI), 304–324 (IAYS…TAGV), 335–355 (VIFY…IAAM), 380–400 (ALCL…LGFF), 413–433 (GLLW…YYYL), and 458–478 (VTAV…GPIF).

The protein belongs to the complex I subunit 2 family. In terms of assembly, NDH-1 is composed of 14 different subunits. Subunits NuoA, H, J, K, L, M, N constitute the membrane sector of the complex.

The protein resides in the cell inner membrane. The enzyme catalyses a quinone + NADH + 5 H(+)(in) = a quinol + NAD(+) + 4 H(+)(out). Its function is as follows. NDH-1 shuttles electrons from NADH, via FMN and iron-sulfur (Fe-S) centers, to quinones in the respiratory chain. The immediate electron acceptor for the enzyme in this species is believed to be ubiquinone. Couples the redox reaction to proton translocation (for every two electrons transferred, four hydrogen ions are translocated across the cytoplasmic membrane), and thus conserves the redox energy in a proton gradient. The polypeptide is NADH-quinone oxidoreductase subunit N (Bdellovibrio bacteriovorus (strain ATCC 15356 / DSM 50701 / NCIMB 9529 / HD100)).